The following is a 205-amino-acid chain: Tic20 family protein Ycf60 (205 aa).

Helical transmembrane passes span 5 to 25, 54 to 74, 102 to 122, 130 to 150, and 163 to 183; these read LFVN…VILI, AISC…FGIV, LIGF…IIQI, IVQA…LTSL, and LADT…TDAL.

The protein belongs to the Tic20 family.

It is found in the plastid. Its subcellular location is the chloroplast membrane. This chain is Tic20 family protein Ycf60 (ycf60), found in Cyanidium caldarium (Red alga).